A 684-amino-acid chain; its full sequence is PAN2-PAN3 deadenylation complex subunit PAN3 (684 aa).

Disordered stretches follow at residues 1-38 (MLPP…RETA), 68-97 (DPST…PARE), and 112-146 (VPKG…STGL). Residues 21–38 (EKAKEKEKKHSPEKRETA) are compositionally biased toward basic and acidic residues. The segment at 36-65 (ETAQRICRNVMIYGYCKYQDQGCIYYHPPA) adopts a C3H1-type zinc-finger fold. Residues 127 to 139 (VPTPSAPTPPVWP) are compositionally biased toward pro residues. The interval 263–544 (GANGASAPGL…SIDEVVKMMG (282 aa)) is pseudokinase domain. Residues arginine 326 and 375-382 (DYHPLSTT) contribute to the ATP site. Positions 387-412 (YLSPNPPEPSPASALANQPPKRRSSP) are disordered. 444-445 (SK) is an ATP binding site. The stretch at 545 to 583 (PRILNELDAVQSYADVLENELGAEVENGRIVRLLTKLGF) forms a coiled coil. The knob domain stretch occupies residues 584–684 (INERAEFELD…NAGNNHRVHR (101 aa)).

This sequence belongs to the protein kinase superfamily. PAN3 family. In terms of assembly, homodimer. Forms a heterotrimer with a catalytic subunit PAN2 to form the poly(A)-nuclease (PAN) deadenylation complex. Interacts (via PAM-2 motif) with poly(A)-binding protein PAB1 (via PABC domain), conferring substrate specificity of the enzyme complex.

It localises to the cytoplasm. Regulatory subunit of the poly(A)-nuclease (PAN) deadenylation complex, one of two cytoplasmic mRNA deadenylases involved in mRNA turnover. PAN specifically shortens poly(A) tails of RNA and the activity is stimulated by poly(A)-binding protein PAB1. PAN deadenylation is followed by rapid degradation of the shortened mRNA tails by the CCR4-NOT complex. Deadenylated mRNAs are then degraded by two alternative mechanisms, namely exosome-mediated 3'-5' exonucleolytic degradation, or deadenylation-dependent mRNA decaping and subsequent 5'-3' exonucleolytic degradation by XRN1. May also be involved in post-transcriptional maturation of mRNA poly(A) tails. PAN3 acts as a positive regulator for PAN activity, recruiting the catalytic subunit PAN2 to mRNA via its interaction with RNA and with PAB1. This chain is PAN2-PAN3 deadenylation complex subunit PAN3, found in Cryptococcus neoformans var. neoformans serotype D (strain B-3501A) (Filobasidiella neoformans).